The following is a 36-amino-acid chain: YFAADGSVVPSISDWNLWVPLGILGIPTIWIALTYR.

One of the components of the bacteriochlorophyll-protein complex in the chromatophore membrane. This Blastochloris viridis (Rhodopseudomonas viridis) protein is Light-harvesting protein B-1015 gamma chain.